The following is a 155-amino-acid chain: Rusticyanin (155 aa).

The region spanning 53–155 (SFEVHDKKNP…TGMFGKIIVK (103 aa)) is the Plastocyanin-like domain. Cu cation contacts are provided by H85, C138, H143, and M148.

Monomer. The cofactor is Cu cation.

The protein localises to the periplasm. In terms of biological role, electron carrier from cytochrome c552 to the A-type oxidase. This is Rusticyanin (rus) from Acidithiobacillus ferrooxidans (Thiobacillus ferrooxidans).